The primary structure comprises 396 residues: Elongation factor Tu (396 aa).

The 196-residue stretch at 10 to 205 (KPHVNIGTIG…ACDDNIPDPV (196 aa)) folds into the tr-type G domain. The tract at residues 19 to 26 (GHVDHGKT) is G1. 19-26 (GHVDHGKT) lines the GTP pocket. T26 contributes to the Mg(2+) binding site. Residues 62-66 (GITIN) form a G2 region. The segment at 83-86 (DAPG) is G3. Residues 83–87 (DAPGH) and 138–141 (NKCD) contribute to the GTP site. The G4 stretch occupies residues 138–141 (NKCD). A G5 region spans residues 175 to 177 (SAL).

This sequence belongs to the TRAFAC class translation factor GTPase superfamily. Classic translation factor GTPase family. EF-Tu/EF-1A subfamily. In terms of assembly, monomer.

Its subcellular location is the cytoplasm. It catalyses the reaction GTP + H2O = GDP + phosphate + H(+). Its function is as follows. GTP hydrolase that promotes the GTP-dependent binding of aminoacyl-tRNA to the A-site of ribosomes during protein biosynthesis. This is Elongation factor Tu from Corynebacterium glutamicum (strain R).